Consider the following 381-residue polypeptide: DNA primase DnaG (381 aa).

A Toprim domain is found at 173-259 (DAILVVEGRS…EVEDLEKDEI (87 aa)). 3 residues coordinate Mg(2+): Glu179, Asp221, and Asp223.

This sequence belongs to the archaeal DnaG primase family. In terms of assembly, forms a ternary complex with MCM helicase and DNA. Component of the archaeal exosome complex. Mg(2+) serves as cofactor.

It carries out the reaction ssDNA + n NTP = ssDNA/pppN(pN)n-1 hybrid + (n-1) diphosphate.. In terms of biological role, RNA polymerase that catalyzes the synthesis of short RNA molecules used as primers for DNA polymerase during DNA replication. Also part of the exosome, which is a complex involved in RNA degradation. Acts as a poly(A)-binding protein that enhances the interaction between heteromeric, adenine-rich transcripts and the exosome. This chain is DNA primase DnaG, found in Methanothermobacter thermautotrophicus (strain ATCC 29096 / DSM 1053 / JCM 10044 / NBRC 100330 / Delta H) (Methanobacterium thermoautotrophicum).